The sequence spans 41 residues: Hadrurin (41 aa).

It belongs to the non-disulfide-bridged peptide (NDBP) superfamily. Long chain multifunctional peptide (group 2) family. Expressed by the venom gland.

It is found in the secreted. In terms of biological role, antimicrobial activity against S.typhimurium, K.pneumoniae, E.cloacae, P.aeruginosa, E.coli and S.marcescens. Also shows hemolytic activity when tested in human erythrocytes. The sequence is that of Hadrurin from Hoffmannihadrurus aztecus (Mexican scorpion).